Here is a 391-residue protein sequence, read N- to C-terminus: 4-hydroxy-3-methylbut-2-en-1-yl diphosphate synthase (flavodoxin) (391 aa).

The [4Fe-4S] cluster site is built by cysteine 281, cysteine 284, cysteine 316, and glutamate 323. The tract at residues 372–391 (EMGGEDGQGGIKGSPVVSVS) is disordered.

It belongs to the IspG family. [4Fe-4S] cluster serves as cofactor.

It carries out the reaction (2E)-4-hydroxy-3-methylbut-2-enyl diphosphate + oxidized [flavodoxin] + H2O + 2 H(+) = 2-C-methyl-D-erythritol 2,4-cyclic diphosphate + reduced [flavodoxin]. It participates in isoprenoid biosynthesis; isopentenyl diphosphate biosynthesis via DXP pathway; isopentenyl diphosphate from 1-deoxy-D-xylulose 5-phosphate: step 5/6. Functionally, converts 2C-methyl-D-erythritol 2,4-cyclodiphosphate (ME-2,4cPP) into 1-hydroxy-2-methyl-2-(E)-butenyl 4-diphosphate. This Renibacterium salmoninarum (strain ATCC 33209 / DSM 20767 / JCM 11484 / NBRC 15589 / NCIMB 2235) protein is 4-hydroxy-3-methylbut-2-en-1-yl diphosphate synthase (flavodoxin).